Reading from the N-terminus, the 277-residue chain is MATSSSAFDDELPMEEGMPELLDDEDVPSTLPSLLEQNLDTAPKGDEFKLVKRKRKSGNAIDVVMEDVSQVDEDATADTADDSTGPKSSKRTKGVKGESRVVPVPKHRYTPLKDNWVNIFTPIVKNLGLQVRFNLKKRQVEIRNPVDREDTTDLQKATDFVRAFILGFEVNDAIALIRLDHLFLETFEVADVKHSLKGDHVSRAIGRIAGKDGRTKLVIENTTKTRIVVANTKIHILGAYQNLKLARNAVCSLILGSNPSKVYGSLRNMASRGAERL.

Disordered regions lie at residues 1–52 (MATS…KLVK) and 72–100 (DEDA…GESR). Residues 8-27 (FDDELPMEEGMPELLDDEDV) are compositionally biased toward acidic residues. Positions 30–40 (TLPSLLEQNLD) are enriched in polar residues. Residues 72-81 (DEDATADTAD) show a composition bias toward acidic residues. Residues 198–250 (GDHVSRAIGRIAGKDGRTKLVIENTTKTRIVVANTKIHILGAYQNLKLARNAV) form the KH domain.

Belongs to the PNO1 family. As to quaternary structure, part of the small subunit (SSU) processome, composed of more than 70 proteins and the RNA chaperone small nucleolar RNA (snoRNA) U3.

Its subcellular location is the nucleus. It is found in the nucleolus. Part of the small subunit (SSU) processome, first precursor of the small eukaryotic ribosomal subunit. During the assembly of the SSU processome in the nucleolus, many ribosome biogenesis factors, an RNA chaperone and ribosomal proteins associate with the nascent pre-rRNA and work in concert to generate RNA folding, modifications, rearrangements and cleavage as well as targeted degradation of pre-ribosomal RNA by the RNA exosome. Positively regulates dimethylation of two adjacent adenosines in the loop of a conserved hairpin near the 3'-end of 18S rRNA. The sequence is that of RNA-binding protein pno-1 from Caenorhabditis elegans.